Reading from the N-terminus, the 195-residue chain is ATP-dependent Clp protease proteolytic subunit (195 aa).

Ser98 (nucleophile) is an active-site residue. The active site involves His123.

The protein belongs to the peptidase S14 family. In terms of assembly, fourteen ClpP subunits assemble into 2 heptameric rings which stack back to back to give a disk-like structure with a central cavity, resembling the structure of eukaryotic proteasomes.

Its subcellular location is the cytoplasm. The enzyme catalyses Hydrolysis of proteins to small peptides in the presence of ATP and magnesium. alpha-casein is the usual test substrate. In the absence of ATP, only oligopeptides shorter than five residues are hydrolyzed (such as succinyl-Leu-Tyr-|-NHMec, and Leu-Tyr-Leu-|-Tyr-Trp, in which cleavage of the -Tyr-|-Leu- and -Tyr-|-Trp bonds also occurs).. Cleaves peptides in various proteins in a process that requires ATP hydrolysis. Has a chymotrypsin-like activity. Plays a major role in the degradation of misfolded proteins. This Thermodesulfovibrio yellowstonii (strain ATCC 51303 / DSM 11347 / YP87) protein is ATP-dependent Clp protease proteolytic subunit.